We begin with the raw amino-acid sequence, 135 residues long: Probable disulfide formation protein (135 aa).

A helical membrane pass occupies residues 7-26 (SYCLYLAWLFSCIGTLMSVY). A disulfide bond links C36 and C39. The next 2 helical transmembrane spans lie at 41-60 (YQRICLFPLVVILGIAAYRE) and 67-84 (YTLPLALVGFGIAIYQVC). C96 and C101 form a disulfide bridge. A helical membrane pass occupies residues 109–131 (GFITMPMASAAAFCAIACLLVLA).

It belongs to the DsbB family. BdbC subfamily.

It localises to the cell inner membrane. Its function is as follows. Required for disulfide bond formation in some proteins. The polypeptide is Probable disulfide formation protein (Chlamydia trachomatis serovar D (strain ATCC VR-885 / DSM 19411 / UW-3/Cx)).